Reading from the N-terminus, the 298-residue chain is Inosose dehydratase 1 (298 aa).

Belongs to the IolE/MocC family. Glutathione serves as cofactor. It depends on Co(2+) as a cofactor. Mn(2+) is required as a cofactor.

The enzyme catalyses scyllo-inosose = 3D-3,5/4-trihydroxycyclohexane-1,2-dione + H2O. The protein operates within polyol metabolism; myo-inositol degradation into acetyl-CoA; acetyl-CoA from myo-inositol: step 2/7. In terms of biological role, catalyzes the dehydration of inosose (2-keto-myo-inositol, 2KMI or 2,4,6/3,5-pentahydroxycyclohexanone) to 3D-(3,5/4)-trihydroxycyclohexane-1,2-dione (D-2,3-diketo-4-deoxy-epi-inositol). The protein is Inosose dehydratase 1 of Bacillus cereus (strain ZK / E33L).